Reading from the N-terminus, the 218-residue chain is MKIILLGAPGAGKGTQSTSIAEHFGLQRISTGDMLRNAAKEGKPLGLEAKKIMDAGQLVSDDIIMALIKECLSKDECSCGVLFDGFPRTIGQAEALRAEEIHIDHVVEIYVQDEEIVKRMSGRRVHLASGRSYHVMFNPPKQEGLDDATGEPLVQRADDSEETVKKRLQIYHAQTAPLVEYYTMLEQKGESNAPRYHKIEGVGTVEEIRNRIFAALES.

Residue 10–15 participates in ATP binding; it reads GAGKGT. Positions 30–59 are NMP; the sequence is STGDMLRNAAKEGKPLGLEAKKIMDAGQLV. AMP is bound by residues Thr31, Arg36, 57–59, 85–88, and Gln92; these read QLV and GFPR. The interval 122-159 is LID; that stretch reads GRRVHLASGRSYHVMFNPPKQEGLDDATGEPLVQRADD. ATP contacts are provided by residues Arg123 and 132–133; that span reads SY. 2 residues coordinate AMP: Arg156 and Arg167. Gly203 contacts ATP.

Belongs to the adenylate kinase family. Monomer.

It localises to the cytoplasm. It catalyses the reaction AMP + ATP = 2 ADP. Its pathway is purine metabolism; AMP biosynthesis via salvage pathway; AMP from ADP: step 1/1. Its function is as follows. Catalyzes the reversible transfer of the terminal phosphate group between ATP and AMP. Plays an important role in cellular energy homeostasis and in adenine nucleotide metabolism. In Chlorobium chlorochromatii (strain CaD3), this protein is Adenylate kinase.